The primary structure comprises 513 residues: Protein CYCLOPS (513 aa).

The segment at 327–435 (QIHGGTASGE…ERSRKMAEAK (109 aa)) is disordered. A compositionally biased stretch (low complexity) spans 334–347 (SGEPSQSESSAAAP). Polar residues predominate over residues 359-381 (PSNSSQTLCDSSWKQVGESTQNR). A compositionally biased stretch (basic and acidic residues) spans 384–396 (GVREQIMDNLKDD). 2 consecutive short sequence motifs (nuclear localization signal) follow at residues 397 to 401 (RKRKR) and 421 to 424 (KKRR). The stretch at 447-513 (MQAVMKRCEN…ERLLSETGKI (67 aa)) forms a coiled coil.

Belongs to the CYCLOPS family.

It localises to the nucleus. Functionally, involved symbiotic signaling. Required for root infection by symbiotic rhizobia, infection thread (IT) formation, and nodule development. Required for symbiosome formation (i.e. the release of the bacteria from the ITs) and subsequent symbiosome development. Involved in arbuscular mycorrhizal (AM) symbiosis. This is Protein CYCLOPS from Pisum sativum (Garden pea).